The following is a 219-amino-acid chain: Small ribosomal subunit protein uS3c (219 aa).

Residues I47–L118 enclose the KH type-2 domain.

It belongs to the universal ribosomal protein uS3 family. Part of the 30S ribosomal subunit.

It localises to the plastid. Its subcellular location is the chloroplast. The chain is Small ribosomal subunit protein uS3c (rps3) from Chara vulgaris (Common stonewort).